The primary structure comprises 303 residues: Glutamate formimidoyltransferase (303 aa).

H81 functions as the For formimidoyltransferase activity in the catalytic mechanism. Position 164-172 (164-172 (GPSVVGKAG)) interacts with folate.

It belongs to the formiminotransferase family.

It localises to the cytoplasm. It catalyses the reaction (6S)-5-formyl-5,6,7,8-tetrahydrofolate + L-glutamate = N-formyl-L-glutamate + (6S)-5,6,7,8-tetrahydrofolate + H(+). The enzyme catalyses 5-formimidoyltetrahydrofolate + L-glutamate = N-formimidoyl-L-glutamate + (6S)-5,6,7,8-tetrahydrofolate. The catalysed reaction is (6S)-5-formyl-5,6,7,8-tetrahydrofolate + ATP = (6R)-5,10-methenyltetrahydrofolate + ADP + phosphate. The protein operates within amino-acid degradation; L-histidine degradation into L-glutamate; L-glutamate from N-formimidoyl-L-glutamate (transferase route): step 1/1. It participates in one-carbon metabolism; tetrahydrofolate interconversion. Its function is as follows. Catalyzes the transfer of the formyl group from N-formylglutamate to tetrahydrofolate (THF) to yield 5-formyltetrahydrofolate (5-CHO-THF) and glutamate (Glu). The triglutamate form of 5-CHO-THF (5-CHO-THF-Glu3) can also be used as substrate. It can also catalyze the transfer of the formimino group from N-formiminoglutamate to tetrahydrofolate (THF) to yield 5-formiminotetrahydrofolate (5-NH=CH-THF) and glutamate (Glu). It can replace YgfA to catalyze the irreversible ATP-dependent transformation of 5-CHO-THF to form 5,10-methenyltetrahydrofolate (5,10-CH=THF). In Thermoplasma acidophilum (strain ATCC 25905 / DSM 1728 / JCM 9062 / NBRC 15155 / AMRC-C165), this protein is Glutamate formimidoyltransferase.